Here is a 256-residue protein sequence, read N- to C-terminus: Ribosomal RNA small subunit methyltransferase A (256 aa).

6 residues coordinate S-adenosyl-L-methionine: His12, Leu14, Gly39, Glu60, Asp81, and Asn103.

The protein belongs to the class I-like SAM-binding methyltransferase superfamily. rRNA adenine N(6)-methyltransferase family. RsmA subfamily.

The protein resides in the cytoplasm. The catalysed reaction is adenosine(1518)/adenosine(1519) in 16S rRNA + 4 S-adenosyl-L-methionine = N(6)-dimethyladenosine(1518)/N(6)-dimethyladenosine(1519) in 16S rRNA + 4 S-adenosyl-L-homocysteine + 4 H(+). Specifically dimethylates two adjacent adenosines (A1518 and A1519) in the loop of a conserved hairpin near the 3'-end of 16S rRNA in the 30S particle. May play a critical role in biogenesis of 30S subunits. The chain is Ribosomal RNA small subunit methyltransferase A from Methylibium petroleiphilum (strain ATCC BAA-1232 / LMG 22953 / PM1).